A 154-amino-acid chain; its full sequence is Nascent polypeptide-associated complex subunit beta (154 aa).

The 66-residue stretch at 33 to 98 (EQDDTKLIEA…PQEKNVTQLI (66 aa)) folds into the NAC-A/B domain. Positions 125–154 (APTELNAGAPAGGDEGIPDLIDGEKFDEVE) are disordered.

This sequence belongs to the NAC-beta family. As to quaternary structure, part of the nascent polypeptide-associated complex (NAC), consisting of EGD2 and EGD1. NAC associates with ribosomes via EGD1.

Its subcellular location is the cytoplasm. The protein resides in the nucleus. Component of the nascent polypeptide-associated complex (NAC), a dynamic component of the ribosomal exit tunnel, protecting the emerging polypeptides from interaction with other cytoplasmic proteins to ensure appropriate nascent protein targeting. The NAC complex also promotes mitochondrial protein import by enhancing productive ribosome interactions with the outer mitochondrial membrane and blocks the inappropriate interaction of ribosomes translating non-secretory nascent polypeptides with translocation sites in the membrane of the endoplasmic reticulum. EGD1 may act as a transcription factor that exert a negative effect on the expression of several genes that are transcribed by RNA polymerase II. This Scheffersomyces stipitis (strain ATCC 58785 / CBS 6054 / NBRC 10063 / NRRL Y-11545) (Yeast) protein is Nascent polypeptide-associated complex subunit beta (EGD1).